A 303-amino-acid chain; its full sequence is N-acetylmuramic acid 6-phosphate etherase (303 aa).

Residues 62 to 225 (IVAAFRQGGR…TTASMVLLGK (164 aa)) form the SIS domain. The active-site Proton donor is Glu90. The active site involves Glu121.

The protein belongs to the GCKR-like family. MurNAc-6-P etherase subfamily. Homodimer.

It carries out the reaction N-acetyl-D-muramate 6-phosphate + H2O = N-acetyl-D-glucosamine 6-phosphate + (R)-lactate. Its pathway is amino-sugar metabolism; 1,6-anhydro-N-acetylmuramate degradation. It functions in the pathway amino-sugar metabolism; N-acetylmuramate degradation. It participates in cell wall biogenesis; peptidoglycan recycling. Specifically catalyzes the cleavage of the D-lactyl ether substituent of MurNAc 6-phosphate, producing GlcNAc 6-phosphate and D-lactate. Together with AnmK, is also required for the utilization of anhydro-N-acetylmuramic acid (anhMurNAc) either imported from the medium or derived from its own cell wall murein, and thus plays a role in cell wall recycling. The sequence is that of N-acetylmuramic acid 6-phosphate etherase from Histophilus somni (strain 129Pt) (Haemophilus somnus).